The sequence spans 936 residues: Calcium homeostasis endoplasmic reticulum protein (936 aa).

An N-acetylmethionine modification is found at M1. One copy of the SURP motif repeat lies at 15–57; sequence VIDKLAQFVARNGPEFEKMTMEKQKDNPKFSFLFGGEFYSYYK. K18 carries the post-translational modification N6-acetyllysine. The interval 77–102 is disordered; that stretch reads EPTSAMPPLPQPPLAPTASLTPAQGT. Residues 81–91 are compositionally biased toward pro residues; the sequence is AMPPLPQPPLA. One can recognise a CID domain in the interval 149 to 289; it reads ETQLDMSEFD…QLQSPALGLG (141 aa). The disordered stretch occupies residues 328–646; that stretch reads LAQQQQQQQQ…RQGPPHINHD (319 aa). Residues 330 to 355 are compositionally biased toward low complexity; it reads QQQQQQQQQQQQQPQPQPQPQIQLPQ. Over residues 363–383 the composition is skewed to pro residues; that stretch reads TPPPPAPPPASAPAPTIPPTT. The span at 395–405 shows a compositional bias: polar residues; the sequence is PGSSEYDTSAG. The segment covering 488 to 500 has biased composition (low complexity); the sequence is PWNNQPDPNWNNQ. A compositionally biased stretch (pro residues) spans 534–550; that stretch reads PFPPHQQHPQFNQPPHP. The span at 551-560 shows a compositional bias: low complexity; that stretch reads HNFNRFPPRF. Basic and acidic residues predominate over residues 561–572; the sequence is MQDDFPPRHPFE. Positions 594–603 are enriched in basic residues; it reads PHHHPGHRMP. The residue at position 723 (Y723) is a Phosphotyrosine. The disordered stretch occupies residues 731 to 887; sequence RARRRKGQEK…DPIKGGDVRD (157 aa). Residues 748 to 758 are compositionally biased toward basic residues; it reads SRSRSKSRGRS. Low complexity predominate over residues 759–773; the sequence is SSRSSSRSSKSSRSS. A compositionally biased stretch (basic residues) spans 774–824; the sequence is SRSHSRSRSRSSSRSRSRSRSRSRSSRSRSRSRSRSRSKSYSPGRRRRSRS. Residues S822, S824, and S826 each carry the phosphoserine modification. T828 bears the Phosphothreonine mark. At S837 the chain carries Phosphoserine. Positions 850-900 constitute a G-patch domain; the sequence is EENKGHQMLVKMGWSGSGGLGAKEQGIQDPIKGGDVRDKWDQYKGVGVALD. Residue K853 forms a Glycyl lysine isopeptide (Lys-Gly) (interchain with G-Cter in SUMO2) linkage. Residues S864 and S866 each carry the phosphoserine modification. A Glycyl lysine isopeptide (Lys-Gly) (interchain with G-Cter in SUMO2) cross-link involves residue K881. K888 bears the N6-acetyllysine mark. Position 913 is a phosphoserine (S913).

It localises to the cytoplasm. It is found in the perinuclear region. The protein localises to the endoplasmic reticulum. Its function is as follows. Involved in calcium homeostasis, growth and proliferation. This is Calcium homeostasis endoplasmic reticulum protein from Mus musculus (Mouse).